We begin with the raw amino-acid sequence, 94 residues long: uncharacterized protein (94 aa).

This is an uncharacterized protein from Haemophilus influenzae (strain ATCC 51907 / DSM 11121 / KW20 / Rd).